A 331-amino-acid chain; its full sequence is DNA-directed RNA polymerase subunit alpha (331 aa).

Residues M1–R237 are alpha N-terminal domain (alpha-NTD). The segment at F251 to N331 is alpha C-terminal domain (alpha-CTD).

The protein belongs to the RNA polymerase alpha chain family. In terms of assembly, homodimer. The RNAP catalytic core consists of 2 alpha, 1 beta, 1 beta' and 1 omega subunit. When a sigma factor is associated with the core the holoenzyme is formed, which can initiate transcription.

The enzyme catalyses RNA(n) + a ribonucleoside 5'-triphosphate = RNA(n+1) + diphosphate. DNA-dependent RNA polymerase catalyzes the transcription of DNA into RNA using the four ribonucleoside triphosphates as substrates. This chain is DNA-directed RNA polymerase subunit alpha, found in Buchnera aphidicola subsp. Baizongia pistaciae (strain Bp).